The primary structure comprises 464 residues: Protein FAM90A23 (464 aa).

3 disordered regions span residues Met-1–Leu-42, Val-69–Ala-389, and His-415–Pro-437. 2 stretches are compositionally biased toward basic and acidic residues: residues Gly-74–Ala-89 and Asn-97–Arg-114. The segment covering Leu-180–Leu-197 has biased composition (low complexity).

The protein belongs to the FAM90 family.

This chain is Protein FAM90A23, found in Homo sapiens (Human).